The following is a 255-amino-acid chain: Aliphatic sulfonates import ATP-binding protein SsuB (255 aa).

An ABC transporter domain is found at 12–233 (LLLNAVSKHY…RLGSVRLAEL (222 aa)). 44-51 (GRSGGGKS) is a binding site for ATP.

It belongs to the ABC transporter superfamily. Aliphatic sulfonates importer (TC 3.A.1.17.2) family. As to quaternary structure, the complex is composed of two ATP-binding proteins (SsuB), two transmembrane proteins (SsuC) and a solute-binding protein (SsuA).

Its subcellular location is the cell inner membrane. It carries out the reaction ATP + H2O + aliphatic sulfonate-[sulfonate-binding protein]Side 1 = ADP + phosphate + aliphatic sulfonateSide 2 + [sulfonate-binding protein]Side 1.. Functionally, part of the ABC transporter complex SsuABC involved in aliphatic sulfonates import. Responsible for energy coupling to the transport system. The protein is Aliphatic sulfonates import ATP-binding protein SsuB of Escherichia coli O6:H1 (strain CFT073 / ATCC 700928 / UPEC).